The chain runs to 3828 residues: Histone-lysine N-methyltransferase trithorax (3828 aa).

Disordered stretches follow at residues Glu25–Ala179, Ala356–Gln390, and Phe512–Arg589. Positions Ala29–Ala57 are enriched in low complexity. Residues Ala77–Ala89 are compositionally biased toward polar residues. A compositionally biased stretch (low complexity) spans Gly101–Gly114. A compositionally biased stretch (acidic residues) spans Asp152 to Ser165. Over residues Ser359–Ala387 the composition is skewed to low complexity. Over residues Arg513–Glu523 the composition is skewed to basic and acidic residues. Residues Asp524 to Ala553 are compositionally biased toward acidic residues. Residues Ala554 to Phe581 show a composition bias toward basic and acidic residues. A DNA-binding region (nuclear receptor) is located at residues Ala725–Ile839. 3 disordered regions span residues Glu933 to Pro1036, Glu1075 to Pro1094, and Ala1131 to Asn1170. Basic and acidic residues predominate over residues Ala960–Lys974. 2 stretches are compositionally biased toward low complexity: residues Ala998–Ser1022 and Ala1078–Pro1094. Over residues Glu1140–Asn1170 the composition is skewed to polar residues. PHD-type zinc fingers lie at residues Arg1251–Cys1334, Tyr1335–Cys1380, and Gly1408–Arg1469. Positions Ala1483–Glu1644 constitute a Bromo domain. The segment at Thr1708–Val1748 adopts a C2HC pre-PHD-type zinc-finger fold. The PHD-type 4 zinc-finger motif lies at Ile1769–Ala1816. An FYR N-terminal domain is found at Lys1856 to Gln1913. 8 disordered regions span residues Cys2252–Ser2272, Ala2464–Gln2510, Arg2826–Ser2848, Arg2897–Ala2973, Ala2988–Met3031, Ala3117–Gly3178, Asn3314–Asp3338, and Lys3457–Asp3487. Low complexity-rich tracts occupy residues Glu2253–Thr2268, Gln2483–Gln2510, and Ser2836–Ser2848. The span at Arg2897–Thr2917 shows a compositional bias: polar residues. 4 stretches are compositionally biased toward low complexity: residues Ala2956–Ala2973, Ala2988–Glu2997, Leu3005–Met3031, and Ala3117–Ser3132. Over residues Gln3148–Ser3164 the composition is skewed to polar residues. Residues Asp3328 to Asp3338 are compositionally biased toward acidic residues. The region spanning Gly3493 to Tyr3577 is the FYR C-terminal domain. The SET domain maps to Asp3690–Lys3806. S-adenosyl-L-methionine-binding positions include His3700, Arg3702, Tyr3744, and Asn3767 to His3768. Zn(2+) contacts are provided by Cys3770, Cys3816, Cys3818, and Cys3823. The Post-SET domain occupies Glu3812–Asn3828.

Belongs to the class V-like SAM-binding methyltransferase superfamily. Histone-lysine methyltransferase family. TRX/MLL subfamily. In terms of assembly, interacts with ash1 via its SET domain.

It is found in the nucleus. It carries out the reaction L-lysyl(9)-[histone H3] + 3 S-adenosyl-L-methionine = N(6),N(6),N(6)-trimethyl-L-lysyl(9)-[histone H3] + 3 S-adenosyl-L-homocysteine + 3 H(+). Histone methyltransferase that methylates 'Lys-4' of histone H3 (H3K4me). H3K4me represents a specific tag for epigenetic transcriptional activation. Functions in segment determination through interaction with genes of bithorax (BX-C) and antennapedia (ANT-C) complexes. Acts as an activator of BX-C. Involved in the very early regulation of homeotic genes expressed only in the posterior region of the embryo. This Drosophila virilis (Fruit fly) protein is Histone-lysine N-methyltransferase trithorax (trx).